Consider the following 86-residue polypeptide: Large ribosomal subunit protein bL27 (86 aa).

Positions 1-21 are disordered; it reads MAHKKGGGSSRNGRDSESKRL.

This sequence belongs to the bacterial ribosomal protein bL27 family.

This chain is Large ribosomal subunit protein bL27, found in Rubrobacter xylanophilus (strain DSM 9941 / JCM 11954 / NBRC 16129 / PRD-1).